The primary structure comprises 104 residues: Vesicle-associated membrane protein 3 (104 aa).

The disordered stretch occupies residues 1–23 (MTTNAPAGSSAAAGSSRRLQQTQ). At 1–81 (MTTNAPAGSS…KRKYWWKNCK (81 aa)) the chain is on the cytoplasmic side. Low complexity predominate over residues 7 to 16 (AGSSAAAGSS). Positions 18 to 78 (RLQQTQNQVD…AKLKRKYWWK (61 aa)) constitute a v-SNARE coiled-coil homology domain. Glycyl lysine isopeptide (Lys-Gly) (interchain with G-Cter in ubiquitin) cross-links involve residues Lys-70, Lys-72, and Lys-81. Residues 82–102 (MWAIGITVVVIIIIIIVVWSI) form a helical; Anchor for type IV membrane protein membrane-spanning segment. Over 103-104 (SS) the chain is Vesicular.

Belongs to the synaptobrevin family. As to quaternary structure, interacts with POPDC1 (via the C-terminus cytoplasmic tail). Interacts with BCAP31; involved in VAMP3 export from the endoplasmic reticulum. Interacts with BAIAP3; this interaction is increased in the presence of calcium. Interacts with PICALM. Ubiquitinated by RNF167 at Lys-70, Lys-72 and Lys-81, regulating the recycling endosome pathway.

It is found in the early endosome membrane. The protein localises to the recycling endosome membrane. It localises to the synapse. Its subcellular location is the synaptosome. Its function is as follows. SNARE involved in vesicular transport from the late endosomes to the trans-Golgi network. The chain is Vesicle-associated membrane protein 3 (VAMP3) from Bos taurus (Bovine).